The sequence spans 309 residues: Malate dehydrogenase (309 aa).

Residues 10 to 15 and aspartate 34 each bind NAD(+); that span reads GAGNVG. Residues arginine 83 and arginine 89 each contribute to the substrate site. Residues asparagine 96 and 119–121 each bind NAD(+); that span reads VSN. Positions 121 and 152 each coordinate substrate. Histidine 176 (proton acceptor) is an active-site residue.

Belongs to the LDH/MDH superfamily. MDH type 3 family.

The enzyme catalyses (S)-malate + NAD(+) = oxaloacetate + NADH + H(+). Functionally, catalyzes the reversible oxidation of malate to oxaloacetate. The chain is Malate dehydrogenase from Heliobacterium modesticaldum (strain ATCC 51547 / Ice1).